The primary structure comprises 738 residues: Protein Aster-B (738 aa).

Positions 1–81 (MKGFKLSCTA…SGGKNSKKSQ (81 aa)) are disordered. The segment covering 8–19 (CTASNSNRSTPA) has biased composition (polar residues). Ser-28 and Ser-30 each carry phosphoserine. Over residues 41-51 (MVEKGSDHSSD) the composition is skewed to basic and acidic residues. A compositionally biased stretch (low complexity) spans 59 to 70 (QGVQRSCSSQSG). Residues 96-163 (EDFRKLFKQL…KDICSMTKEK (68 aa)) form the GRAM domain. The tract at residues 254–301 (EENEVNDSSSKSSIETKPDASPQLPKKSITNSTLTSTGSSEAPVSFDG) is disordered. Positions 259-268 (NDSSSKSSIE) are enriched in polar residues. Phosphoserine is present on Ser-274. Residues 281-295 (SITNSTLTSTGSSEA) are compositionally biased toward polar residues. Positions 372–543 (SGRQYVNEVF…ELAKTESTYL (172 aa)) constitute a VASt domain. At Tyr-389 the chain carries Phosphotyrosine. The segment at 544–566 (AEMHRQSPKEKASKTTTVRRRKR) is disordered. Positions 545–556 (EMHRQSPKEKAS) are enriched in basic and acidic residues. Residues Ser-550 and Ser-581 each carry the phosphoserine modification. Phosphothreonine occurs at positions 584, 585, and 587. Residues 623–643 (LLLVISCVICFSLVLLVILNM) form a helical membrane-spanning segment.

It localises to the endoplasmic reticulum membrane. Its subcellular location is the cell membrane. In terms of biological role, cholesterol transporter that mediates non-vesicular transport of cholesterol from the plasma membrane (PM) to the endoplasmic reticulum (ER). Contains unique domains for binding cholesterol and the PM, thereby serving as a molecular bridge for the transfer of cholesterol from the PM to the ER. Plays a crucial role in cholesterol homeostasis in the adrenal gland and has the unique ability to localize to the PM based on the level of membrane cholesterol. In lipid-poor conditions localizes to the ER membrane and in response to excess cholesterol in the PM is recruited to the endoplasmic reticulum-plasma membrane contact sites (EPCS) which is mediated by the GRAM domain. At the EPCS, the sterol-binding VASt/ASTER domain binds to the cholesterol in the PM and facilitates its transfer from the PM to ER. The polypeptide is Protein Aster-B (GRAMD1B) (Homo sapiens (Human)).